The following is a 385-amino-acid chain: Protein pelota homolog (385 aa).

Residue K162 forms a Glycyl lysine isopeptide (Lys-Gly) (interchain with G-Cter in SUMO2) linkage. Residues S374, S380, S381, and S382 each carry the phosphoserine modification.

It belongs to the eukaryotic release factor 1 family. Pelota subfamily. As to quaternary structure, component of the Pelota-HBS1L complex, also named Dom34-Hbs1 complex, composed of PELO and HBS1L. Interacts with PINK1. Interacts with ABCE1. Interacts with CNOT4. A divalent metal cation is required as a cofactor.

It localises to the cytoplasm. Functionally, component of the Pelota-HBS1L complex, a complex that recognizes stalled ribosomes and triggers the No-Go Decay (NGD) pathway. In the Pelota-HBS1L complex, PELO recognizes ribosomes stalled at the 3' end of an mRNA and engages stalled ribosomes by destabilizing mRNA in the mRNA channel. Following mRNA extraction from stalled ribosomes by the SKI complex, the Pelota-HBS1L complex promotes recruitment of ABCE1, which drives the disassembly of stalled ribosomes, followed by degradation of damaged mRNAs as part of the NGD pathway. As part of the PINK1-regulated signaling, upon mitochondrial damage is recruited to the ribosome/mRNA-ribonucleoprotein complex associated to mitochondrial outer membrane thereby enabling the recruitment of autophagy receptors and induction of mitophagy. The chain is Protein pelota homolog (PELO) from Pongo abelii (Sumatran orangutan).